We begin with the raw amino-acid sequence, 310 residues long: Calbindin-32 (310 aa).

EF-hand domains lie at 35-70 (LSAN…FVSS), 84-120 (TMLE…EENF), 131-166 (ESSV…LLKE), 177-212 (KLIE…KENF), 224-259 (LTKE…LLEL), and 283-304 (TDKH…LAKI). The Ca(2+) site is built by D48, D50, N52, Y54, E59, D98, N100, D102, K104, E109, D144, D146, S148, Y150, E155, D190, N192, D194, R196, E201, D237, D239, S241, T243, and E248.

This sequence belongs to the calbindin family. As to expression, expressed in a large number of neuron of the brain and the thoracic ganglion as well as in two small muscles of the thorax.

This is Calbindin-32 (Cbp53E) from Drosophila melanogaster (Fruit fly).